We begin with the raw amino-acid sequence, 362 residues long: Severin (362 aa).

A Gelsolin-like 1 repeat occupies 53-102 (FKVVPVPESSYGKFYDGDSYIILHTFKEGNSLKHDIHFFLGTFTTQDEAG). 162 to 170 (RLLHISGDK) serves as a coordination point for a 1,2-diacyl-sn-glycero-3-phospho-(1D-myo-inositol-4,5-bisphosphate). 2 Gelsolin-like repeats span residues 172–212 (AKVA…QEKN) and 280–323 (LKFS…NEKK).

This sequence belongs to the villin/gelsolin family.

In terms of biological role, severin blocks the ends of F-actin and causes the fragmentation and depolymerization of actin filaments in a Ca(2+) dependent manner. This Dictyostelium discoideum (Social amoeba) protein is Severin (sevA).